The following is a 386-amino-acid chain: Small ribosomal subunit protein mS31 (386 aa).

It belongs to the mitochondrion-specific ribosomal protein mS31 family. As to quaternary structure, component of the mitochondrial ribosome small subunit (28S) which comprises a 12S rRNA and about 30 distinct proteins.

It is found in the mitochondrion. The polypeptide is Small ribosomal subunit protein mS31 (MRPS31) (Bos taurus (Bovine)).